The chain runs to 154 residues: SsrA-binding protein (154 aa).

The protein belongs to the SmpB family.

The protein localises to the cytoplasm. In terms of biological role, required for rescue of stalled ribosomes mediated by trans-translation. Binds to transfer-messenger RNA (tmRNA), required for stable association of tmRNA with ribosomes. tmRNA and SmpB together mimic tRNA shape, replacing the anticodon stem-loop with SmpB. tmRNA is encoded by the ssrA gene; the 2 termini fold to resemble tRNA(Ala) and it encodes a 'tag peptide', a short internal open reading frame. During trans-translation Ala-aminoacylated tmRNA acts like a tRNA, entering the A-site of stalled ribosomes, displacing the stalled mRNA. The ribosome then switches to translate the ORF on the tmRNA; the nascent peptide is terminated with the 'tag peptide' encoded by the tmRNA and targeted for degradation. The ribosome is freed to recommence translation, which seems to be the essential function of trans-translation. This is SsrA-binding protein from Gluconacetobacter diazotrophicus (strain ATCC 49037 / DSM 5601 / CCUG 37298 / CIP 103539 / LMG 7603 / PAl5).